Here is a 1940-residue protein sequence, read N- to C-terminus: Myosin-13 (1940 aa).

A Myosin N-terminal SH3-like domain is found at 33–82; sequence DSKKACFAMDDKEMYVKGMIQSRENDKVTVKTLDDRTLTLNSDQVFPMNP. A Myosin motor domain is found at 86–782; the sequence is DKIEDMAMMT…LLGLLEEMRD (697 aa). Lys-130 is subject to N6,N6,N6-trimethyllysine. 179-186 lines the ATP pocket; it reads GESGAGKT. Actin-binding regions lie at residues 659–681 and 761–775; these read LNKLMTNLRSTHPHFVRCLIPNE and RFGHTKVFFKAGLLG. One can recognise an IQ domain in the interval 785-814; that stretch reads LVTLMTRTQAICRGYLMRVEFKKMMERRES. The stretch at 843-1940 forms a coiled coil; the sequence is LLKSAEAERE…RDVGAQKMEE (1098 aa). Residues 1886–1940 form a disordered region; the sequence is RQAEEAEEQANTQMSKCRRVQHELEEAEERADIAESQVNKLRAKSRDVGAQKMEE. Over residues 1929–1940 the composition is skewed to basic and acidic residues; that stretch reads KSRDVGAQKMEE.

Belongs to the TRAFAC class myosin-kinesin ATPase superfamily. Myosin family. As to quaternary structure, muscle myosin is a hexameric protein that consists of 2 heavy chain subunits (MHC), 2 alkali light chain subunits (MLC) and 2 regulatory light chain subunits (MLC-2).

The protein localises to the cytoplasm. It localises to the myofibril. Functionally, fast twitching myosin mediating the high-velocity and low-tension contractions of specific striated muscles. This Canis lupus familiaris (Dog) protein is Myosin-13 (MYH13).